The primary structure comprises 533 residues: uncharacterized protein (533 aa).

A disordered region spans residues 1–26; that stretch reads MKRFFSKLFSKSPTSGRVPSPDSDYS. 2 positions are modified to phosphoserine: Ser20 and Ser23. Tyr25 bears the Phosphotyrosine mark. Ser26 carries the phosphoserine modification. A run of 10 helical transmembrane segments spans residues 178 to 198, 213 to 230, 242 to 264, 274 to 296, 313 to 333, 353 to 373, 394 to 414, 435 to 455, 466 to 486, and 495 to 515; these read ILAVLHIPVALIWLNLEHILI, YMRVFILAAPGYAVFEAL, PITYVLCFAAPLNILLNYLLVWH, APVAVATTFWFQSICLILYICFS, LSPMLHFSFHGMLMIVTEWAA, SILLTSTSLLFQIPFAFAVAS, RVAYSLALCISIFDGSLIFCF, IFPILSLFIVTDGLNAVGGGL, GLISIGSSYLFALPVTVFVVV, and IWCGMILSSVTAITCQFTVLF.

This sequence belongs to the multi antimicrobial extrusion (MATE) (TC 2.A.66.1) family.

Its subcellular location is the vacuole membrane. This is an uncharacterized protein from Schizosaccharomyces pombe (strain 972 / ATCC 24843) (Fission yeast).